A 202-amino-acid polypeptide reads, in one-letter code: Alpha-latrotoxin-Lm1a (202 aa).

ANK repeat units follow at residues 95 to 109 (LYNA…VGFK), 110 to 120 (LMESPEININE), 122 to 132 (NDWPVASTLLR), 133 to 138 (SSNVNV), 142 to 161 (NSDT…DINT), 163 to 170 (NGHLNIVK), 171 to 182 (YLVEEEDLSVDG), K184, 185 to 191 (YGIDMTI), and 193 to 202 (TALDIATDLK). Positions 175 to 181 (EEDLSVD) are 4C4.1 epitope.

This sequence belongs to the cationic peptide 01 (latrotoxin) family. 03 (alpha-latrotoxin) subfamily. In terms of assembly, homotetramer in membranes. Post-translationally, processed by furin-like proteases at both the N- and C-termini. In terms of processing, contains 1 disulfide bond. In terms of tissue distribution, expressed in venom gland, cephalothorax, and abdomen tissues from both males and females.

It localises to the secreted. The protein resides in the target cell membrane. Functionally, presynaptic neurotoxin that causes massive release of neurotransmitters from vertebrate (but not invertebrate) nerve terminals and endocrine cells via a complex mechanism involving activation of receptor(s) and toxin insertion into the plasma membrane with subsequent pore formation. Binds to neurexin-1-alpha (NRXN1) in a calcium dependent manner, adhesion G protein-coupled receptor L1 (ADGRL1, also termed latrophilin-1 and calcium-independent receptor of latrotoxin (CIRL)), and receptor-type tyrosine-protein phosphatase S (PTPRS), also termed PTP sigma. NRXN1 and PTPRS are suggested to provide a platform for binding and subsequent pore formation events. In contrast, binding to ADGRL1 does not involve oligomerization and channel formation, but direct downstream stimulation of the synaptic fusion machinery. This is Alpha-latrotoxin-Lm1a from Latrodectus mactans (Black widow spider).